The following is a 149-amino-acid chain: Ribonuclease pancreatic (149 aa).

A signal peptide spans 1–25 (MGLENSLILFSLLVLVLGWVQPSLG). The segment at 25–62 (GKESSPDKFKRQHMDTEGSSKSSPTYCNQMRSPQEMTK) is disordered. Positions 28–42 (SSPDKFKRQHMDTEG) are enriched in basic and acidic residues. Residues lysine 32 and arginine 35 each coordinate substrate. Residue histidine 37 is the Proton acceptor of the active site. Residues 43-61 (SSKSSPTYCNQMRSPQEMT) show a composition bias toward polar residues. 4 disulfide bridges follow: cysteine 51/cysteine 109, cysteine 65/cysteine 120, cysteine 83/cysteine 135, and cysteine 90/cysteine 97. Residues 66-70 (KPVNT) and lysine 91 each bind substrate. The active-site Proton donor is the histidine 144.

The protein belongs to the pancreatic ribonuclease family. In terms of assembly, monomer. Interacts with and forms tight 1:1 complexes with RNH1. Dimerization of two such complexes may occur. Interaction with RNH1 inhibits this protein.

Its subcellular location is the secreted. The enzyme catalyses an [RNA] containing cytidine + H2O = an [RNA]-3'-cytidine-3'-phosphate + a 5'-hydroxy-ribonucleotide-3'-[RNA].. It carries out the reaction an [RNA] containing uridine + H2O = an [RNA]-3'-uridine-3'-phosphate + a 5'-hydroxy-ribonucleotide-3'-[RNA].. Endonuclease that catalyzes the cleavage of RNA on the 3' side of pyrimidine nucleotides. Acts on single-stranded and double-stranded RNA. The sequence is that of Ribonuclease pancreatic (RNASE1) from Sundamys muelleri (Mueller's giant sunda rat).